We begin with the raw amino-acid sequence, 225 residues long: NAD(P)H-quinone oxidoreductase subunit K, chloroplastic (225 aa).

[4Fe-4S] cluster-binding residues include Cys-43, Cys-44, Cys-108, and Cys-139.

This sequence belongs to the complex I 20 kDa subunit family. As to quaternary structure, NDH is composed of at least 16 different subunits, 5 of which are encoded in the nucleus. [4Fe-4S] cluster serves as cofactor.

The protein localises to the plastid. Its subcellular location is the chloroplast thylakoid membrane. The enzyme catalyses a plastoquinone + NADH + (n+1) H(+)(in) = a plastoquinol + NAD(+) + n H(+)(out). It catalyses the reaction a plastoquinone + NADPH + (n+1) H(+)(in) = a plastoquinol + NADP(+) + n H(+)(out). Functionally, NDH shuttles electrons from NAD(P)H:plastoquinone, via FMN and iron-sulfur (Fe-S) centers, to quinones in the photosynthetic chain and possibly in a chloroplast respiratory chain. The immediate electron acceptor for the enzyme in this species is believed to be plastoquinone. Couples the redox reaction to proton translocation, and thus conserves the redox energy in a proton gradient. This Populus alba (White poplar) protein is NAD(P)H-quinone oxidoreductase subunit K, chloroplastic.